The primary structure comprises 138 residues: MSPISIELIIQISIGLSASLILLFAFLPQTLLTIKTKNTAALTISMFIICFIARLCFSLSAILTIIVYIHNQNYGLSLYALTLPVLICHGINMLLNLIIAFIKINNVYKAKIHKMNENEYIIFAYAQKLKEKVSIKNK.

Helical transmembrane passes span 8–28 (LIIQ…AFLP), 47–67 (FIIC…TIIV), and 82–102 (TLPV…IAFI).

The protein to U.parvum UU007, UU008 and UU041.

The protein localises to the cell membrane. This is an uncharacterized protein from Ureaplasma parvum serovar 3 (strain ATCC 700970).